A 104-amino-acid chain; its full sequence is Putative arsenate reductase (104 aa).

The active site involves C12.

Belongs to the ArsC family.

It carries out the reaction [glutaredoxin]-dithiol + arsenate + glutathione + H(+) = glutathionyl-S-S-[glutaredoxin] + arsenite + H2O. In terms of biological role, reduction of arsenate [As(V)] to arsenite [As(III)]. This protein expands the substrate specificity of ArsAB pump which can extrude arsenite and antimonite to allow for arsenate pumping and resistance. The sequence is that of Putative arsenate reductase (yfjU) from Escherichia coli (strain K12).